Here is a 393-residue protein sequence, read N- to C-terminus: 4-hydroxyphenylpyruvate dioxygenase (393 aa).

Position 2 is an N-acetylthreonine (T2). VOC domains are found at residues H18–K149 and I180–K338. K132 is subject to N6-succinyllysine. H183 serves as a coordination point for Fe cation. A phosphoserine mark is found at S211, S226, and S250. Fe cation-binding residues include H266 and E349.

The protein belongs to the 4HPPD family. Homodimer. It depends on Fe cation as a cofactor.

The protein localises to the cytoplasm. The protein resides in the endoplasmic reticulum membrane. It is found in the golgi apparatus membrane. The enzyme catalyses 3-(4-hydroxyphenyl)pyruvate + O2 = homogentisate + CO2. Its pathway is amino-acid degradation; L-phenylalanine degradation; acetoacetate and fumarate from L-phenylalanine: step 3/6. Functionally, catalyzes the conversion of 4-hydroxyphenylpyruvic acid to homogentisic acid, one of the steps in tyrosine catabolism. This Rattus norvegicus (Rat) protein is 4-hydroxyphenylpyruvate dioxygenase (Hpd).